The following is a 1089-amino-acid chain: WD repeat-containing protein on Y chromosome (1089 aa).

WD repeat units lie at residues 155 to 199 (EEVA…IRTA), 207 to 249 (PHAV…RGPF), 329 to 368 (RIPL…EPSA), 372 to 411 (GHNG…LLQT), 462 to 501 (THAA…RKII), 514 to 553 (TIDI…VIRN), and 601 to 641 (FHTD…RRYS). A disordered region spans residues 661–684 (KRSKRWASRAPHSGSHMMSHTGSH). The segment covering 672 to 684 (HSGSHMMSHTGSH) has biased composition (low complexity). WD repeat units follow at residues 767-806 (KTGD…IPEA) and 850-889 (GHLK…LGTL). The tract at residues 1049 to 1089 (LNIKLPSRRRSDRTNDPRNMRTAKTRGDMGLGHRSSHTSQN) is disordered.

This chain is WD repeat-containing protein on Y chromosome, found in Drosophila willistoni (Fruit fly).